A 316-amino-acid chain; its full sequence is Pentatricopeptide repeat-containing protein At1g19525 (316 aa).

PPR repeat units follow at residues aspartate 9 to proline 43, aspartate 44 to alanine 78, serine 79 to proline 113, serine 115 to proline 149, aspartate 150 to isoleucine 184, and glycine 185 to proline 219.

The protein belongs to the PPR family. P subfamily.

The chain is Pentatricopeptide repeat-containing protein At1g19525 from Arabidopsis thaliana (Mouse-ear cress).